Here is a 313-residue protein sequence, read N- to C-terminus: Ribosomal RNA small subunit methyltransferase H (313 aa).

S-adenosyl-L-methionine is bound by residues 35-37 (GGH), D55, F79, D100, and Q107.

The protein belongs to the methyltransferase superfamily. RsmH family.

The protein localises to the cytoplasm. It carries out the reaction cytidine(1402) in 16S rRNA + S-adenosyl-L-methionine = N(4)-methylcytidine(1402) in 16S rRNA + S-adenosyl-L-homocysteine + H(+). Its function is as follows. Specifically methylates the N4 position of cytidine in position 1402 (C1402) of 16S rRNA. The sequence is that of Ribosomal RNA small subunit methyltransferase H from Burkholderia pseudomallei (strain K96243).